A 146-amino-acid polypeptide reads, in one-letter code: UPF0178 protein BcerKBAB4_2842 (146 aa).

This sequence belongs to the UPF0178 family.

The protein is UPF0178 protein BcerKBAB4_2842 of Bacillus mycoides (strain KBAB4) (Bacillus weihenstephanensis).